A 154-amino-acid polypeptide reads, in one-letter code: NADPH-dependent 7-cyano-7-deazaguanine reductase (154 aa).

Residues 1 to 11 (MAKKPVKDLKQ) are compositionally biased toward basic and acidic residues. Positions 1 to 31 (MAKKPVKDLKQLGHATPVPASPEEATLERVP) are disordered. The active-site Thioimide intermediate is C52. D59 (proton donor) is an active-site residue. Residues 74 to 76 (IES) and 93 to 94 (HE) each bind substrate.

It belongs to the GTP cyclohydrolase I family. QueF type 1 subfamily.

It is found in the cytoplasm. The catalysed reaction is 7-aminomethyl-7-carbaguanine + 2 NADP(+) = 7-cyano-7-deazaguanine + 2 NADPH + 3 H(+). It participates in tRNA modification; tRNA-queuosine biosynthesis. Catalyzes the NADPH-dependent reduction of 7-cyano-7-deazaguanine (preQ0) to 7-aminomethyl-7-deazaguanine (preQ1). The polypeptide is NADPH-dependent 7-cyano-7-deazaguanine reductase (Parvibaculum lavamentivorans (strain DS-1 / DSM 13023 / NCIMB 13966)).